The chain runs to 488 residues: 5'-3' exonuclease PLD3 (488 aa).

Residues 1–38 (MKPKLMYQELKVPVEEPAGELPMNEIEAWKAAEKKARW) lie on the Cytoplasmic side of the membrane. The helical; Signal-anchor for type II membrane protein transmembrane segment at 39 to 59 (VLLVLILAVVGFGALMTQLFL) threads the bilayer. The Lumenal segment spans residues 60–488 (WEYGDLHLFG…DSVGNACRLL (429 aa)). 2 disulfide bridges follow: C77–C237 and C81–C235. Residues N97 and N132 are each glycosylated (N-linked (GlcNAc...) asparagine). The PLD phosphodiesterase 1 domain occupies 194-221 (THGVLHTKFWVVDQTHFYLGSANMDWRS). Active-site residues include H199, K201, and D206. H199 acts as the Proton donor in catalysis. Residues H199 and K201 each contribute to the phosphate site. N216 contributes to the phosphate binding site. Residues N234, N282, and N385 are each glycosylated (N-linked (GlcNAc...) asparagine). C364 and C485 are disulfide-bonded. A PLD phosphodiesterase 2 domain is found at 409-435 (YARVNHNKYMVTERTTYIGTSNWSGSY). Phosphate is bound at residue H414. The active-site Nucleophile is the H414. F436 lines the Mg(2+) pocket.

It belongs to the phospholipase D family. Homodimer. Interacts with APP. N-glycosylated. In terms of processing, proteolytically processed to a soluble form that is stable within endosomes and lysosomes. During transport through the secretory pathway becomes proteolysed by cysteine proteases, thereby releasing a stable soluble lysosomal lumenal polypeptide, whereas the transmembrane-bound fragment is rapidly degraded. Its transport route to lysosomes involves ubiquitination and the ESCRT complex. Post-translationally, ubiquitinated. Ubiquitination mediates sorting into lysosomes.

The protein localises to the endoplasmic reticulum membrane. It is found in the lysosome lumen. It localises to the early endosome membrane. Its subcellular location is the late endosome membrane. The protein resides in the golgi apparatus membrane. The protein localises to the endosome membrane. The enzyme catalyses Exonucleolytic cleavage in the 5'- to 3'-direction to yield nucleoside 3'-phosphates.. The catalysed reaction is a 5'-end 5'-dephospho-ribonucleotidyl-ribonucleotide-RNA + H2O = a ribonucleoside 3'-phosphate + a 5'-end dephospho-ribonucleoside-RNA + H(+). It carries out the reaction a ribonucleoside 3'-phosphate-2'-3'-cyclophospho-GMP + H2O = a ribonucleoside 3'-phosphate + 2',3'-cyclophospho-GMP + H(+). It catalyses the reaction a 5'-end 5'-dephospho-2'-deoxyribonucleotidyl-2'-deoxyribonucleotide in single-stranded DNA + H2O = a 5'-end dephospho-2'-deoxyribonucleoside in single-stranded DNA + a 2'-deoxyribonucleoside 3'-phosphate + H(+). The enzyme catalyses a 5'-end 5'-phospho-2'-deoxyribonucleotide in single-stranded DNA + H2O = a 5'-end 5'-dephospho-2'-deoxyribonucleotide in single-stranded DNA + phosphate. The catalysed reaction is a 3-lyso-sn-glycero-1-phospho-(3'-acyl-1'-sn-glycerol) + a 1-acyl-sn-glycerol = a 3-acyl-sn-glycero-1-phospho-(3'-acyl-1'-sn-glycerol) + glycerol. It carries out the reaction 3-lyso-sn-glycero-1-phospho-(3'-(9Z-octadecenoyl)-1'-sn-glycerol) + 1-(9Z-octadecenoyl)-sn-glycerol = 3-(9Z-octadecenoyl)-sn-glycero-1-phospho-(3'-(9Z-octadecenoyl)-1'-sn-glycerol) + glycerol. Its function is as follows. 5'-&gt;3' exonuclease that hydrolyzes the phosphodiester bond of single-stranded DNA (ssDNA) and RNA molecules to form nucleoside 3'-monophosphates and 5'-end 5'-hydroxy deoxyribonucleotide/ribonucleotide fragments. Partially redundant with PLD4, can cleave all four nucleotides displaying higher efficiency for ssDNA and RNA fragments initiated with uridine and guanosine residues and lower efficiency for cytidine-initiated substrates. As a result, it does not always degrade polynucleotides to the single nucleotide level, it can stall at specific sites sparing certain fragments from exonucleolytic degradation. Processes self and pathogenic ssDNA and RNA molecules that reach the endolysosomal compartment via phagocytosis or autophagy and may serve as 'danger' signals for recognition by innate immune receptors such as toll-like receptors (TLRs). Degrades mitochondrial CpG-rich ssDNA fragments to prevent TLR9 activation and autoinflammatory response, but it can cleave viral RNA to generate ligands for TLR7 activation and initiate antiviral immune responses. In plasmacytoid dendritic cells, it cooperates with endonuclease RNASET2 to release 2',3'-cyclic guanosine monophosphate (2',3'-cGMP), a potent stimulatory ligand for TLR7. Produces 2',3'-cGMPs and cytidine-rich RNA fragments that occupy TLR7 ligand-binding pockets and trigger a signaling-competent state. Can exert polynucleotide phosphatase activity toward 5'-phosphorylated ssDNA substrates although at a slow rate. Transphosphatidylase that catalyzes the exchange with R to S stereo-inversion of the glycerol moiety between (S,R)-lysophosphatidylglycerol (LPG) and monoacylglycerol (MAG) substrates to yield (S,S)-bis(monoacylglycero)phosphate (BMP). Can synthesize a variety of (S,S)-BMPs representing the main phospholipid constituent of lysosomal intralumenal vesicle (ILV) membranes that bind acid hydrolases for lipid degradation. Regulates the homeostasis and interorganellar communication of the endolysosomal system with an overall impact on cellular removal of dysfunctional organelles via autophagy as well as proper protein and lipid turnover. May play a role in myotube formation in response to ER stress. The polypeptide is 5'-3' exonuclease PLD3 (Pld3) (Rattus norvegicus (Rat)).